Here is a 69-residue protein sequence, read N- to C-terminus: uncharacterized protein (69 aa).

This is an uncharacterized protein from Homo sapiens (Human).